The sequence spans 687 residues: DnaJ protein ERDJ2A (687 aa).

Topologically, residues 1–8 (MAASEENS) are lumenal. Residues 9-29 (ALFPIFILTIMAIPLVPYTMV) traverse the membrane as a helical segment. Over 30–65 (KLSGALSKKQRTIHCQCLECDRSGKYKRSLFKKISN) the chain is Cytoplasmic. The helical transmembrane segment at 66 to 86 (FSTWSNLTLVLLWVVMIFLIY) threads the bilayer. The Lumenal portion of the chain corresponds to 87–190 (YTKNMSREAQ…FLLDIDGASG (104 aa)). Asn-90 carries N-linked (GlcNAc...) asparagine glycosylation. Residues 99 to 164 (DPFSILGLEP…VSRENFEKYG (66 aa)) enclose the J domain. Residues 191 to 211 (GILLLWIVGVCILLPLVIAVI) traverse the membrane as a helical segment. Residues 205-603 (PLVIAVIYLS…IGCDKKQALK (399 aa)) form the SEC63 domain. Over 212-687 (YLSRSSKYTG…SSEESGSEEE (476 aa)) the chain is Cytoplasmic. The disordered stretch occupies residues 619-687 (SDEGAIAEEG…SSEESGSEEE (69 aa)). The span at 623–654 (AIAEEGMEEEDEIEEEDYDDDYESEYSEDEDE) shows a compositional bias: acidic residues.

As to quaternary structure, interacts with OEP61/TPR7. In terms of tissue distribution, expressed in leaves, flower buds and flowers.

It localises to the endoplasmic reticulum membrane. In terms of biological role, required for integral membrane and secreted preprotein translocation across the endoplasmic reticulum membrane. This is DnaJ protein ERDJ2A (ERDJ2A) from Arabidopsis thaliana (Mouse-ear cress).